The primary structure comprises 282 residues: Pantothenate synthetase (282 aa).

ATP is bound at residue Met-30–His-37. The active-site Proton donor is His-37. Gln-61 lines the (R)-pantoate pocket. Gln-61 lines the beta-alanine pocket. Residue Gly-149–Asp-152 participates in ATP binding. Gln-155 lines the (R)-pantoate pocket. ATP contacts are provided by residues Ala-178 and Met-186–Arg-189.

It belongs to the pantothenate synthetase family. In terms of assembly, homodimer.

The protein resides in the cytoplasm. The catalysed reaction is (R)-pantoate + beta-alanine + ATP = (R)-pantothenate + AMP + diphosphate + H(+). It functions in the pathway cofactor biosynthesis; (R)-pantothenate biosynthesis; (R)-pantothenate from (R)-pantoate and beta-alanine: step 1/1. Functionally, catalyzes the condensation of pantoate with beta-alanine in an ATP-dependent reaction via a pantoyl-adenylate intermediate. This is Pantothenate synthetase from Marinomonas sp. (strain MWYL1).